We begin with the raw amino-acid sequence, 351 residues long: AT-hook motif nuclear-localized protein 10 (351 aa).

The segment at 1–151 (MSGSETGLMA…RPPGSSSKRL (151 aa)) is disordered. The span at 23-37 (HQQQQHSQAQPQQSQ) shows a compositional bias: low complexity. A compositionally biased stretch (polar residues) spans 60-77 (SPPQQYQPNSAGENSVLN). A Bipartite nuclear localization signal motif is present at residues 97 to 105 (KKRRGRPRK). 2 DNA-binding regions (a.T hook) span residues 97–109 (KKRR…YGPD) and 138–149 (KKRGRPPGSSSK). Residues 159–301 (TGIGFTPHVL…QMGLSSPVLP (143 aa)) enclose the PPC domain. Polar residues-rich tracts occupy residues 310–325 (MTPS…SESS) and 334–351 (IHQS…MPWK). Positions 310 to 351 (MTPSSPQSRGTMSESSCGGGHGSPIHQSTGGPYNNTINMPWK) are disordered.

The protein localises to the nucleus. Functionally, transcription factor that specifically binds AT-rich DNA sequences related to the nuclear matrix attachment regions (MARs). This chain is AT-hook motif nuclear-localized protein 10, found in Arabidopsis thaliana (Mouse-ear cress).